Consider the following 611-residue polypeptide: mRNA export factor GLE1 (611 aa).

Disordered regions lie at residues Ser69 to Cys94 and Lys220 to Arg243. Residues Asp71–Asp89 are compositionally biased toward acidic residues.

It belongs to the GLE1 family. As to quaternary structure, part of the nuclear pore complex (NPC). The NPC has an eight-fold symmetrical structure comprising a central transport channel and two rings, the cytoplasmic and nuclear rings, to which eight filaments are attached. The cytoplasmic filaments have loose ends, while the nuclear filaments are joined in a distal ring, forming a nuclear basket. NPCs are highly dynamic in configuration and composition, and can be devided in 3 subcomplexes, the NUP62 subcomplex, the NUP107-160 subcomplex and the NUP93 subcomplex, containing approximately 30 different nucleoporin proteins.

It is found in the nucleus envelope. Its subcellular location is the nucleus. The protein localises to the nuclear pore complex. Required for seed viability. The sequence is that of mRNA export factor GLE1 from Arabidopsis thaliana (Mouse-ear cress).